Reading from the N-terminus, the 357-residue chain is Glutamyl endopeptidase (357 aa).

The first 29 residues, 1-29 (MKGKFLKVSSLFVATLTTATLVSSPAANA), serve as a signal peptide directing secretion. Residues 30–68 (LSSKAMDNHPQQTQTDKQQTPKIQKGGNLKPLEQRERAN) constitute a propeptide that is removed on maturation. Residues 33–58 (KAMDNHPQQTQTDKQQTPKIQKGGNL) form a disordered region. A compositionally biased stretch (low complexity) spans 40 to 54 (QQTQTDKQQTPKIQK). Active-site charge relay system residues include His119, Asp161, and Ser237. The interval 282–357 (NFANDDHPNN…NNNSDNPDAA (76 aa)) is disordered. A run of 18 repeats spans residues 289–291 (PNN), 292–294 (PDN), 295–297 (PDN), 298–300 (PNN), 301–303 (PDN), 304–306 (PNN), 307–309 (PDN), 310–312 (PNN), 313–315 (PDN), 316–318 (PDN), 319–321 (PNN), 322–324 (PDN), 325–327 (PNN), 328–330 (PDN), 331–333 (PNN), 337–339 (PNN), 340–342 (PNN), and 343–345 (PDN). Residues 289 to 345 (PNNPDNPDNPNNPDNPNNPDNPNNPDNPDNPNNPDNPNNPDNPNNPDQPNNPNNPDN) form an 18 X 3 AA repeats of P-[DN]-N region. Positions 291–357 (NPDNPDNPNN…NNNSDNPDAA (67 aa)) are enriched in low complexity.

It belongs to the peptidase S1B family. Post-translationally, proteolytically cleaved by aureolysin (aur). This cleavage leads to the activation of SspA.

The protein resides in the secreted. The catalysed reaction is Preferential cleavage: Glu-|-Xaa, Asp-|-Xaa.. Functionally, preferentially cleaves peptide bonds on the carboxyl-terminal side of aspartate and glutamate. Along with other extracellular proteases it is involved in colonization and infection of human tissues. Required for proteolytic maturation of thiol protease SspB and inactivation of SspC, an inhibitor of SspB. It is the most important protease for degradation of fibronectin-binding protein (FnBP) and surface protein A, which are involved in adherence to host cells. May also protect bacteria against host defense mechanism by cleaving the immunoglobulin classes IgG, IgA and IgM. May be involved in the stability of secreted lipases. The sequence is that of Glutamyl endopeptidase (sspA) from Staphylococcus aureus (strain MRSA252).